Consider the following 322-residue polypeptide: Mas-related G-protein coupled receptor member X1 (322 aa).

The Extracellular portion of the chain corresponds to 1–31 (MDPTISTLDTELTPINGTEETLCYKQTLSLT). An N-linked (GlcNAc...) asparagine glycan is attached at asparagine 16. A helical transmembrane segment spans residues 32 to 52 (VLTCIVSLVGLTGNAVVLWLL). The Cytoplasmic portion of the chain corresponds to 53-67 (GCRMRRNAFSIYILN). A helical transmembrane segment spans residues 68–88 (LAAADFLFLSGRLIYSLLSFI). Topologically, residues 89–96 (SIPHTISK) are extracellular. The chain crosses the membrane as a helical span at residues 97–117 (ILYPVMMFSYFAGLSFLSAVS). Residues 118–144 (TERCLSVLWPIWYRCHRPTHLSAVVCV) lie on the Cytoplasmic side of the membrane. Residues 145–165 (LLWALSLLRSILEWMLCGFLF) form a helical membrane-spanning segment. The Extracellular portion of the chain corresponds to 166–177 (SGADSAWCQTSD). The chain crosses the membrane as a helical span at residues 178–198 (FITVAWLIFLCVVLCGSSLVL). At 199–221 (LIRILCGSRKIPLTRLYVTILLT) the chain is on the cytoplasmic side. Residues 222–242 (VLVFLLCGLPFGIQFFLFLWI) form a helical membrane-spanning segment. Residues 243 to 254 (HVDREVLFCHVH) lie on the Extracellular side of the membrane. Residues 255-275 (LVSIFLSALNSSANPIIYFFV) form a helical membrane-spanning segment. The Cytoplasmic portion of the chain corresponds to 276–322 (GSFRQRQNRQNLKLVLQRALQDASEVDEGGGQLPEEILELSGSRLEQ).

This sequence belongs to the G-protein coupled receptor 1 family. Mas subfamily. In terms of tissue distribution, uniquely localized in a subset of small dorsal root and trigeminal sensory neurons.

Its subcellular location is the cell membrane. In terms of biological role, orphan receptor. Probably involved in the function of nociceptive neurons. May regulate nociceptor function and/or development, including the sensation or modulation of pain. Potently activated by enkephalins including BAM22 (bovine adrenal medulla peptide 22) and BAM (8-22). BAM22 is the most potent compound and evoked a large and dose-dependent release of intracellular calcium in stably transfected cells. G(alpha)q proteins are involved in the calcium-signaling pathway. Activated by the antimalarial drug, chloroquine. May mediate chloroquine-induced itch, in a histamine-independent manner. The polypeptide is Mas-related G-protein coupled receptor member X1 (MRGPRX1) (Homo sapiens (Human)).